A 152-amino-acid chain; its full sequence is Small ribosomal subunit protein uS11A (152 aa).

A disordered region spans residues 131–152 (EDVTPIPSDSTRRKGGRRGRRL). The segment covering 143–152 (RKGGRRGRRL) has biased composition (basic residues).

It belongs to the universal ribosomal protein uS11 family.

The protein is Small ribosomal subunit protein uS11A of Anopheles gambiae (African malaria mosquito).